The sequence spans 264 residues: MKIEAVVFDWAGTTVDYGCFAPLEVFMKIFHKRGVEITAEEARKPMGLLKIDHIRVLTEMPRISNEWKHVFGQLPTEEDIHEMYEEFEEILFAILPYYATPIDGVKEVVSSLRERGIKIGSTTGYTREMMDIVAKEAEIQGYKPDFLVTPNDVPAGRPYPWMCYKNAMELCVYPMNHMIKIGDTVSDMKEGRNAGMWTVGVILGSSELGLTEEEVENMDPLELREKIEVVRNRFIENGAHFTIETMQELENVIEHIEKQELIIS.

Asp9 functions as the Nucleophile in the catalytic mechanism. Mg(2+) is bound by residues Asp9 and Ala11. Residue Lys50 is the Schiff-base intermediate with substrate of the active site. Asp183 serves as a coordination point for Mg(2+).

Belongs to the HAD-like hydrolase superfamily. PhnX family. Homodimer. It depends on Mg(2+) as a cofactor.

It carries out the reaction phosphonoacetaldehyde + H2O = acetaldehyde + phosphate + H(+). Involved in phosphonate degradation. The sequence is that of Phosphonoacetaldehyde hydrolase from Bacillus mycoides (strain KBAB4) (Bacillus weihenstephanensis).